The sequence spans 2300 residues: Adenylate cyclase (2300 aa).

2 stretches are compositionally biased toward polar residues: residues 1 to 21 and 28 to 41; these read MTRN…SSIT and TPTS…TRPL. 3 disordered regions span residues 1 to 256, 272 to 593, and 631 to 652; these read MTRN…GSFL, GIRP…DLTR, and TKLF…MDED. Composition is skewed to low complexity over residues 42–61 and 92–152; these read SPSL…VSRS and SSQS…QVSP. A compositionally biased stretch (polar residues) spans 153–169; sequence TGGSRLTQSPTTPSNAS. Residues 170 to 185 show a composition bias toward basic and acidic residues; it reads IREHRMSELGGYRREM. Positions 204–221 are enriched in low complexity; the sequence is QQQPQQPQQQQQQQQQQQ. Polar residues predominate over residues 228–237; it reads VSGTFSNLSQ. Residues 303–313 show a composition bias toward low complexity; that stretch reads SIASITTTASS. The span at 333-344 shows a compositional bias: basic and acidic residues; sequence GDRDDWPGRDSS. Residues 345–357 show a composition bias toward polar residues; it reads EISLPQPSHSGPM. The segment covering 410-421 has biased composition (pro residues); sequence PSRPRTPVPAPE. The segment covering 455–469 has biased composition (polar residues); it reads DSSQNPPKTSSSARS. Basic and acidic residues predominate over residues 484-501; it reads KSNEDPRALKPSLSREDS. The segment covering 511 to 550 has biased composition (polar residues); sequence NGSSSMMGTRSRAQSPAPSWTGTSRGLKANSISDGTSSPA. The span at 552–565 shows a compositional bias: basic residues; that stretch reads SHKKGILGRFRRHN. The segment covering 631-643 has biased composition (low complexity); that stretch reads TKLFTSKKSSSAK. Residues 749 to 841 enclose the Ras-associating domain; it reads SNYYIRVFRS…IDEIGREDNS (93 aa). LRR repeat units follow at residues 867-890, 892-914, 915-938, 939-961, 962-986, 988-1008, 1009-1031, 1033-1055, 1056-1079, 1081-1097, 1098-1119, 1120-1142, 1143-1165, 1166-1188, 1189-1211, and 1213-1234; these read NQKL…LYRK, AEIV…FIQA, CTAL…FATA, SKLT…ELSK, LTGL…GAYK, LRTL…ICEL, ETIV…LMKL, NLEK…VRDL, VSLR…DLPR, EILS…SGSF, ERLR…KAPV, PTLK…IDNL, MNLE…IGNL, KKLD…IGCL, TELR…IWWA, and KLEH…ASRA. Residues 1228 to 1336 form a disordered region; the sequence is PKPASRAPQA…VITPSNGPRK (109 aa). The segment covering 1253-1263 has biased composition (polar residues); it reads ANKNGLLSRTP. The segment covering 1313–1327 has biased composition (low complexity); it reads TSVVSRSTTQSSTGV. LRR repeat units lie at residues 1349 to 1369, 1373 to 1396, 1398 to 1420, 1422 to 1445, 1447 to 1469, and 1474 to 1497; these read SGSL…VFEE, LPEL…TIRS, PQLV…DFLE, HCLL…ISRA, KLQV…PYDW, and NRDL…YRQP. The region spanning 1552 to 1828 is the PPM-type phosphatase domain; sequence PYGMADTLGK…NKLLIMMIGV (277 aa). The disordered stretch occupies residues 1847–1867; the sequence is FSMPQDDPSHVPPSGNKRRKV. The Guanylate cyclase domain maps to 1892–2029; that stretch reads SIVFTDIKNS…PMVNKASRIS (138 aa). Mg(2+)-binding residues include aspartate 1897 and aspartate 1940. The tract at residues 2272-2300 is disordered; it reads LDQAETDDATDNNSSGDVDTLDGSDTEQE. The segment covering 2290-2300 has biased composition (acidic residues); it reads DTLDGSDTEQE.

It belongs to the adenylyl cyclase class-4/guanylyl cyclase family. It depends on Mg(2+) as a cofactor.

It carries out the reaction ATP = 3',5'-cyclic AMP + diphosphate. Its function is as follows. Plays essential roles in regulation of cellular metabolism by catalyzing the synthesis of a second messenger, cAMP. In Neurospora crassa (strain ATCC 24698 / 74-OR23-1A / CBS 708.71 / DSM 1257 / FGSC 987), this protein is Adenylate cyclase (cr-1).